The primary structure comprises 177 residues: Protein ParB (177 aa).

Positions 1–26 (MKRRSYAMLRAAAALAVLVVASPAWA) are cleaved as a signal peptide. The 131-residue stretch at 27–157 (ELRGEVVRII…RGKRVGLWSD (131 aa)) folds into the TNase-like domain. Catalysis depends on residues Arg-53, Glu-61, and Arg-95.

As to quaternary structure, monomer. Ca(2+) is required as a cofactor. In terms of processing, the N-terminus is blocked.

Its subcellular location is the secreted. With respect to regulation, endonuclease activity is inhibited by EDTA. In terms of biological role, involved in plasmid partition. An endonuclease that acts on supercoiled dsDNA, converting it first to open circular DNA and then linearizing it. Preferentially cleaves regions in dsDNA that are capable of forming ssDNA, such as AT-rich regions and sequences that can form cruciforms. Has poor endonucleolytic activity on linear DNA, has 5'-3' exonuclease activity on dsDNA cleaving generating 3'-phosphonucleotides. The polypeptide is Protein ParB (Escherichia coli).